A 384-amino-acid chain; its full sequence is Transcription factor iacI (384 aa).

Its subcellular location is the nucleus. Functionally, transcription factor; part of the gene cluster that mediates the biosynthesis of iso-A82775C, a enylepoxycyclohexane and biosynthetic precursor of the chloropestolide anticancer natural products. In Pestalotiopsis fici (strain W106-1 / CGMCC3.15140), this protein is Transcription factor iacI.